The primary structure comprises 134 residues: Fluoride-specific ion channel FluC (134 aa).

4 helical membrane-spanning segments follow: residues 7–27 (LAVAIGGSLGAMSRYLVTIMA), 38–58 (GTLLVNTLGSFLAGFFLIVLV), 69–89 (LFLFTGFLGAFTTFSSFAAES), and 110–130 (VGSLSMVFIGTLVAKYVLLGH). Na(+)-binding residues include G77 and T80.

This sequence belongs to the fluoride channel Fluc/FEX (TC 1.A.43) family.

The protein localises to the cell inner membrane. The enzyme catalyses fluoride(in) = fluoride(out). Na(+) is not transported, but it plays an essential structural role and its presence is essential for fluoride channel function. Functionally, fluoride-specific ion channel. Important for reducing fluoride concentration in the cell, thus reducing its toxicity. This is Fluoride-specific ion channel FluC from Legionella pneumophila subsp. pneumophila (strain Philadelphia 1 / ATCC 33152 / DSM 7513).